The sequence spans 302 residues: Cardiolipin synthase (CMP-forming) (302 aa).

Positions 65-84 (PRTHCSGAGKAAPEPAAGGD) are disordered. The span at 71 to 84 (GAGKAAPEPAAGGD) shows a compositional bias: low complexity. Helical transmembrane passes span 109 to 129 (IPNL…YLIL), 133 to 153 (FNVA…DGFI), 190 to 212 (IPVP…VFYV), 250 to 270 (LILV…SIYL), and 271 to 289 (QILW…YSYY).

Belongs to the CDP-alcohol phosphatidyltransferase class-I family. It depends on a divalent metal cation as a cofactor.

Its subcellular location is the mitochondrion inner membrane. It carries out the reaction a CDP-1,2-diacyl-sn-glycerol + a 1,2-diacyl-sn-glycero-3-phospho-(1'-sn-glycerol) = a cardiolipin + CMP + H(+). In terms of biological role, catalyzes the synthesis of cardiolipin (CL) (diphosphatidylglycerol) by specifically transferring a phosphatidyl group from CDP-diacylglycerol to phosphatidylglycerol (PG). CL is a key phospholipid in mitochondrial membranes and plays important roles in maintaining the functional integrity and dynamics of mitochondria under both optimal and stress conditions. The sequence is that of Cardiolipin synthase (CMP-forming) (Crls1) from Rattus norvegicus (Rat).